The chain runs to 555 residues: MEGEEYDKILVLNFGSQYFHLIVKRLNNIKIFSETKDYGVELKDIKDMNIKGVILSGGPYSVTEAGSPHLKKEVFEYFLEKKIPIFGICYGMQEIAVQMNGEVKKSKTSEYGCTDVNILRNDNINNITYCRNFGDSSSAMDLYSNYKLMNETCCLFENIKSDITTVWMNHNDEVTKIPENFYLVSSSENCLICSIYNKEYNIYGVQYHPEVYESLDGELMFYNFAYNICKCKKQFDPIRYHELELKNIEKYKHDHYVIAAMSGGIDSTVAAAYTHKIFKERFFGIFIDNGLLRKNEAENVYTFLKSTFPDMNITKIDASENFLSNLQGVTDPEQKRKIIGKLFIEEFEKAVNNIDIDINKTFLLQGTLYPDIIESKCSKNLSDTIKTHHNVGGLPKNLKFKLFEPFKYLFKDDVKTLSRELNLPEEITNRHPFPGPGLAIRVIGEINKHKLNILREVDDIFINDLKQYGLYNQISQAFAVLLSSKSVGVRGDARSYDYVCVLRAVKTSSFMTANWYQIPYDILDKITTRILSEVKGVNRILYDVSSKPPATIEFE.

The Glutamine amidotransferase type-1 domain maps to 8–234 (KILVLNFGSQ…AYNICKCKKQ (227 aa)). C89 serves as the catalytic Nucleophile; for GATase activity. 4 residues coordinate L-glutamine: Q93, N169, D172, and H208. Active-site for GATase activity residues include H208 and E210. The region spanning 235–430 (FDPIRYHELE…LNLPEEITNR (196 aa)) is the GMPS ATP-PPase domain. Residue 262-268 (SGGIDST) participates in ATP binding. XMP is bound by residues R336, Q476, K547, I552, and E553.

As to quaternary structure, homodimer (via the GMPS ATP-PPase domain). It depends on Mg(2+) as a cofactor.

The enzyme catalyses XMP + L-glutamine + ATP + H2O = GMP + L-glutamate + AMP + diphosphate + 2 H(+). The protein operates within purine metabolism; GMP biosynthesis; GMP from XMP (L-Gln route): step 1/1. Its activity is regulated as follows. The GATase domain is allosterically activated by the binding of substrates, ATP and XMP, to the ATPPase domain, thus ensuring that glutamine hydrolysis occurs only when the ATPPase domain is primed to receive ammonia. Inhibited by Na(+). Inhibited by the reaction product GMP. Its function is as follows. Catalyzes the conversion of xanthine monophosphate (XMP) to GMP in the presence of glutamine and ATP through an adenyl-XMP intermediate, which is the final step of de novo synthesis of GMP. The conversion of XMP to GMP involves the coordinated action of the glutamine amidotransferase (GATase) domain that catalyzes the hydrolysis of the amide side chain of glutamine producing ammonia and the ATP pyrophosphatase (ATPPase) domain that catalyzes the synthesis of adenyl-XMP intermediate from ATP. The ammonia produced by the GATase domain is tunnelled to the ATP-PPase domain where it attacks the adenyl-XMP intermediate generating GMP. In Plasmodium falciparum (isolate 3D7), this protein is GMP synthase [glutamine-hydrolyzing].